Reading from the N-terminus, the 147-residue chain is Small ribosomal subunit protein uS13 (147 aa).

Residues 115-147 (SYKGRRHEAGLPVRGQRTKSTFRNSSSVGVKRS) form a disordered region. Residues 132–147 (TKSTFRNSSSVGVKRS) are compositionally biased toward polar residues.

Belongs to the universal ribosomal protein uS13 family. As to quaternary structure, part of the 30S ribosomal subunit. Forms a loose heterodimer with protein S19. Forms two bridges to the 50S subunit in the 70S ribosome.

Functionally, located at the top of the head of the 30S subunit, it contacts several helices of the 16S rRNA. In the 70S ribosome it contacts the 23S rRNA (bridge B1a) and protein L5 of the 50S subunit (bridge B1b), connecting the 2 subunits; these bridges are implicated in subunit movement. The polypeptide is Small ribosomal subunit protein uS13 (Methanobrevibacter smithii (strain ATCC 35061 / DSM 861 / OCM 144 / PS)).